A 338-amino-acid polypeptide reads, in one-letter code: Protein mono-ADP-ribosyltransferase PARP11 (338 aa).

Glutamate 13 is subject to ADP-ribosyl glutamic acid. Lysine 18 is modified (N6-(ADP-ribosyl)lysine). The 85-residue stretch at 22-106 folds into the WWE domain; it reads NEVDDMDTSD…TTGKQRLIKR (85 aa). ADP-ribosylcysteine is present on residues cysteine 56 and cysteine 72. An ADP-ribosyl aspartic acid modification is found at aspartate 87. Residues 123–338 enclose the PARP catalytic domain; sequence IPMPPHWENV…IYPEYLIDFH (216 aa).

It belongs to the ARTD/PARP family. Interacts with PARP12; this interaction plays a role in zika virus suppression. Auto-mono-ADP-ribosylated.

It localises to the nucleus. The protein localises to the nuclear pore complex. It catalyses the reaction L-aspartyl-[protein] + NAD(+) = 4-O-(ADP-D-ribosyl)-L-aspartyl-[protein] + nicotinamide. The catalysed reaction is L-cysteinyl-[protein] + NAD(+) = S-(ADP-D-ribosyl)-L-cysteinyl-[protein] + nicotinamide + H(+). It carries out the reaction L-glutamyl-[protein] + NAD(+) = 5-O-(ADP-D-ribosyl)-L-glutamyl-[protein] + nicotinamide. The enzyme catalyses L-lysyl-[protein] + NAD(+) = N(6)-(ADP-D-ribosyl)-L-lysyl-[protein] + nicotinamide + H(+). Functionally, mono-ADP-ribosyltransferase that mediates mono-ADP-ribosylation of target proteins. Plays a role in nuclear envelope stability and nuclear remodeling during spermiogenesis. Inhibits the type I interferon activated signaling pathway. Mechanistically, mono-ADP-ribosylates beta-TrCP/BTRC to promote IFNAR1 ubiquitination and protect BTRC from ubiquitin-proteasome degradation. Additionally, acts as an antiviral factor by cooperating with PARP12 to suppress Zika virus replication, independent of IFNAR1 regulation or intrinsic PARP enzymatic activity. Instead, facilitates the degradation of viral NS1 and NS3 proteins, potentially disrupting viral replication. The chain is Protein mono-ADP-ribosyltransferase PARP11 from Homo sapiens (Human).